The following is a 462-amino-acid chain: N-myc proto-oncogene protein (462 aa).

The interaction with AURKA stretch occupies residues 19–47 (LEFDSLQPCFYPDEDDFYFGGPDSTPPGE). Positions 61–90 (LSPSRAFPEHSPEPSNWATEMLLPEADLWG) are interaction with AURKA and FBXW7. Positions 76 to 85 (NWATEMLLPE) match the 9aaTAD motif. Disordered stretches follow at residues 134–177 (KLQH…ATLP), 232–289 (AAPA…SSNN), and 332–390 (APSP…LERQ). Composition is skewed to low complexity over residues 143–176 (GVSS…GATL) and 232–244 (AAPA…PASS). The span at 257–276 (TLSDSDDEDDEEEDEEEEID) shows a compositional bias: acidic residues. Ser-259 and Ser-261 each carry phosphoserine; by CK2. The bHLH domain maps to 379 to 431 (ERRRNHNILERQRRNDLRSSFLTLRDHVPELVKNEKAAKVVILKKATEYVHAL). Positions 431 to 452 (LQANEHQLLLEKEKLQARQQQL) are leucine-zipper.

As to quaternary structure, efficient DNA binding requires dimerization with another bHLH protein. Binds DNA as a heterodimer with MAX. Interacts with KDM5A, KDM5B and HUWE1. Interacts with MYCNOS. Interacts with AURKA; interaction is phospho-independent and triggers AURKA activation; AURKA competes with FBXW7 for binding to unphosphorylated MYCN but not for binding to unphosphorylated MYCN. Interacts with FBXW7; FBXW7 competes with AURKA for binding to unphosphorylated MYCN but not for binding to phosphorylated MYCN. Post-translationally, phosphorylated by GSK3-beta which may promote its degradation. Phosphorylated by AURKA.

It localises to the nucleus. In terms of biological role, positively regulates the transcription of MYCNOS in neuroblastoma cells. This chain is N-myc proto-oncogene protein (Mycn), found in Mus musculus (Mouse).